The primary structure comprises 155 residues: MTKQVEIFTDGSCLGNPGPGGYGAILRYRGHEKTFNEGYHLTTNNRMELMAAIVALEALKEDCDVVISTDSQYVRQGITQWIHNWKKRGWKTADKKPVKNVDLWKRLDAALSHHTIKWEWVKGHAGHPENERCDELARAAAMNPIQEDVGYQPGS.

Residues 1–142 enclose the RNase H type-1 domain; the sequence is MTKQVEIFTD…CDELARAAAM (142 aa). Mg(2+) is bound by residues Asp10, Glu48, Asp70, and Asp134.

This sequence belongs to the RNase H family. In terms of assembly, monomer. It depends on Mg(2+) as a cofactor.

The protein localises to the cytoplasm. The catalysed reaction is Endonucleolytic cleavage to 5'-phosphomonoester.. Functionally, endonuclease that specifically degrades the RNA of RNA-DNA hybrids. The polypeptide is Ribonuclease H (Enterobacter sp. (strain 638)).